A 145-amino-acid polypeptide reads, in one-letter code: 3-dehydroquinate dehydratase (145 aa).

Y24 (proton acceptor) is an active-site residue. Residues N75, H81, and D88 each contribute to the substrate site. Residue H102 is the Proton donor of the active site. Residues 103 to 104 and R113 contribute to the substrate site; that span reads LS.

It belongs to the type-II 3-dehydroquinase family. As to quaternary structure, homododecamer.

It carries out the reaction 3-dehydroquinate = 3-dehydroshikimate + H2O. Its pathway is metabolic intermediate biosynthesis; chorismate biosynthesis; chorismate from D-erythrose 4-phosphate and phosphoenolpyruvate: step 3/7. Functionally, catalyzes a trans-dehydration via an enolate intermediate. The chain is 3-dehydroquinate dehydratase from Chelativorans sp. (strain BNC1).